Here is a 542-residue protein sequence, read N- to C-terminus: Membrane protein insertase YidC (542 aa).

6 consecutive transmembrane segments (helical) span residues 6–26 (NILL…WQTD), 326–346 (LVVD…LLMF), 350–370 (FVGN…GMLY), 421–441 (GGCL…WVLL), 458–478 (LSVQ…MFLM), and 501–521 (VIFT…WLVG).

Belongs to the OXA1/ALB3/YidC family. Type 1 subfamily. As to quaternary structure, interacts with the Sec translocase complex via SecD. Specifically interacts with transmembrane segments of nascent integral membrane proteins during membrane integration.

The protein localises to the cell inner membrane. Its function is as follows. Required for the insertion and/or proper folding and/or complex formation of integral membrane proteins into the membrane. Involved in integration of membrane proteins that insert both dependently and independently of the Sec translocase complex, as well as at least some lipoproteins. Aids folding of multispanning membrane proteins. The chain is Membrane protein insertase YidC from Shewanella loihica (strain ATCC BAA-1088 / PV-4).